The chain runs to 515 residues: Nuclear hormone receptor family member nhr-62 (515 aa).

Positions 95 to 170 (NLVCVVCGDQ…AGMNPRAVQS (76 aa)) form a DNA-binding region, nuclear receptor. NR C4-type zinc fingers lie at residues 98 to 118 (CVVC…CNGC) and 134 to 153 (CRFE…CRAC). The interval 169–195 (QSERVEREQNGSPNQIEEDDYKDLSSP) is disordered. Positions 225 to 509 (EMAKLSEQIV…YLCHEVQFIQ (285 aa)) constitute an NR LBD domain. The tract at residues 498-509 (SEYLCHEVQFIQ) is AF-2.

It belongs to the nuclear hormone receptor family. As to expression, widely expressed at a low level in many tissues including the pharynx, sensory neurons, intestine, spermatheca, hypodermis, and excretory cell.

It localises to the nucleus. Functionally, orphan nuclear hormone receptor. Required for metabolic and physiologic responses associated with dietary-restriction-induced longevity. Modulates triglyceride and lipid metabolism and autophagy, associated with dietary-restriction, probably acting via regulation of transcription of target genes. This chain is Nuclear hormone receptor family member nhr-62 (nhr-62), found in Caenorhabditis elegans.